A 465-amino-acid chain; its full sequence is GTPase Der (465 aa).

EngA-type G domains follow at residues 3–167 (PLVA…PEEG) and 179–352 (VRIA…ASAT). Residues 9–16 (GRPNVGKS), 57–61 (DTGGI), 119–122 (NKID), 185–192 (GRPNVGKS), 232–236 (DTAGL), and 297–300 (NKWD) contribute to the GTP site. One can recognise a KH-like domain in the interval 353-437 (HEFSTSEVNQ…PVRFIFREGA (85 aa)).

The protein belongs to the TRAFAC class TrmE-Era-EngA-EngB-Septin-like GTPase superfamily. EngA (Der) GTPase family. As to quaternary structure, associates with the 50S ribosomal subunit.

GTPase that plays an essential role in the late steps of ribosome biogenesis. In Xanthomonas axonopodis pv. citri (strain 306), this protein is GTPase Der.